A 368-amino-acid chain; its full sequence is Proline-rich protein 5-like (368 aa).

Position 28 is a phosphoserine (Ser-28). Positions 312 to 368 are disordered; sequence LGEESGGEDKCLLLQPSFPPPHRQCSSEPNITDGPDEPEQGATGSQEDSELNCASLS. Polar residues predominate over residues 353-368; it reads ATGSQEDSELNCASLS.

Belongs to the PROTOR family. In terms of assembly, interacts with the mammalian target of rapamycin complex 2 (mTORC2) which contains MTOR, MLST8, PRR5, RICTOR, MAPKAP1 and DEPTOR. Interacts with RFFL. Interacts (via C-terminus) with ZFP36 (via C-terminus); this interaction may accelerate ZFP36-mediated mRNA decay during stress. Interacts with RICTOR. In terms of processing, ubiquitinated. Ubiquitination by RFFL promotes proteasomal degradation of PRR5L thereby modifying the substrate-specific activity of the mTORC2 complex. Ubiquitination by RFFL is stimulated by LPA/lysophosphatidic acid.

In terms of biological role, associates with the mTORC2 complex that regulates cellular processes including survival and organization of the cytoskeleton. Regulates the activity of the mTORC2 complex in a substrate-specific manner preventing for instance the specific phosphorylation of PKCs and thereby controlling cell migration. Plays a role in the stimulation of ZFP36-mediated mRNA decay of several ZFP36-associated mRNAs, such as TNF-alpha and GM-CSF, in response to stress. Required for ZFP36 localization to cytoplasmic stress granule (SG) and P-body (PB) in response to stress. The polypeptide is Proline-rich protein 5-like (PRR5L) (Bos taurus (Bovine)).